The sequence spans 427 residues: Trigger factor (427 aa).

A PPIase FKBP-type domain is found at 163-248 (GNIAIIDFKG…VKGIKVKELP (86 aa)).

Belongs to the FKBP-type PPIase family. Tig subfamily.

It is found in the cytoplasm. The catalysed reaction is [protein]-peptidylproline (omega=180) = [protein]-peptidylproline (omega=0). Its function is as follows. Involved in protein export. Acts as a chaperone by maintaining the newly synthesized protein in an open conformation. Functions as a peptidyl-prolyl cis-trans isomerase. In Clostridium botulinum (strain Alaska E43 / Type E3), this protein is Trigger factor.